The primary structure comprises 291 residues: ATP synthase subunit a (291 aa).

5 helical membrane passes run F47–V67, H140–F160, F167–L187, M207–L227, and I230–E250.

The protein belongs to the ATPase A chain family. In terms of assembly, F-type ATPases have 2 components, CF(1) - the catalytic core - and CF(0) - the membrane proton channel. CF(1) has five subunits: alpha(3), beta(3), gamma(1), delta(1), epsilon(1). CF(0) has three main subunits: a, b and c.

The protein localises to the mitochondrion inner membrane. In terms of biological role, mitochondrial membrane ATP synthase (F(1)F(0) ATP synthase or Complex V) produces ATP from ADP in the presence of a proton gradient across the membrane which is generated by electron transport complexes of the respiratory chain. F-type ATPases consist of two structural domains, F(1) - containing the extramembraneous catalytic core and F(0) - containing the membrane proton channel, linked together by a central stalk and a peripheral stalk. During catalysis, ATP synthesis in the catalytic domain of F(1) is coupled via a rotary mechanism of the central stalk subunits to proton translocation. Key component of the proton channel; it may play a direct role in the translocation of protons across the membrane. The polypeptide is ATP synthase subunit a (ATP6) (Zea mays (Maize)).